The primary structure comprises 1024 residues: Beta-galactosidase (1024 aa).

The substrate site is built by asparagine 103 and aspartate 202. Position 202 (aspartate 202) interacts with Na(+). Mg(2+) contacts are provided by glutamate 417, histidine 419, and glutamate 462. Substrate is bound by residues glutamate 462 and 538–541 (EYAH). Glutamate 462 serves as the catalytic Proton donor. Glutamate 538 functions as the Nucleophile in the catalytic mechanism. Asparagine 598 contributes to the Mg(2+) binding site. The Na(+) site is built by phenylalanine 602 and asparagine 605. The substrate site is built by asparagine 605 and tryptophan 1000.

Belongs to the glycosyl hydrolase 2 family. As to quaternary structure, homotetramer. Requires Mg(2+) as cofactor. Na(+) serves as cofactor.

It catalyses the reaction Hydrolysis of terminal non-reducing beta-D-galactose residues in beta-D-galactosides.. This Escherichia coli O17:K52:H18 (strain UMN026 / ExPEC) protein is Beta-galactosidase.